A 458-amino-acid polypeptide reads, in one-letter code: ATP synthase subunit beta (458 aa).

Residue 148–155 (GGAGVGKT) coordinates ATP.

This sequence belongs to the ATPase alpha/beta chains family. F-type ATPases have 2 components, CF(1) - the catalytic core - and CF(0) - the membrane proton channel. CF(1) has five subunits: alpha(3), beta(3), gamma(1), delta(1), epsilon(1). CF(0) has three main subunits: a(1), b(2) and c(9-12). The alpha and beta chains form an alternating ring which encloses part of the gamma chain. CF(1) is attached to CF(0) by a central stalk formed by the gamma and epsilon chains, while a peripheral stalk is formed by the delta and b chains.

Its subcellular location is the cell inner membrane. The enzyme catalyses ATP + H2O + 4 H(+)(in) = ADP + phosphate + 5 H(+)(out). Its function is as follows. Produces ATP from ADP in the presence of a proton gradient across the membrane. The catalytic sites are hosted primarily by the beta subunits. This chain is ATP synthase subunit beta, found in Halorhodospira halophila (strain DSM 244 / SL1) (Ectothiorhodospira halophila (strain DSM 244 / SL1)).